A 672-amino-acid chain; its full sequence is Putative sodium/calcium exchanger 7 (672 aa).

An N-terminal signal peptide occupies residues 1 to 23 (MAQPSILFSLTLIFLISIKSCDA). 12 helical membrane-spanning segments follow: residues 88–108 (VILI…VSSA), 130–150 (VAGV…GSIA), 164–184 (LGEL…TIIL), 196–216 (IRDL…FVFY), 221–241 (LWMP…VIGA), 451–471 (LTLL…QFFL), 479–499 (PGLW…IMVF), 522–542 (IAWI…LGVV), 551–571 (GLTI…VSVV), 581–601 (AAAI…PFTI), 620–640 (LILF…VQKF), and 649–669 (VLIS…TGVL).

Belongs to the Ca(2+):cation antiporter (CaCA) (TC 2.A.19) family.

It is found in the membrane. This Caenorhabditis elegans protein is Putative sodium/calcium exchanger 7 (ncx-7).